Reading from the N-terminus, the 282-residue chain is U1 small nuclear ribonucleoprotein A (282 aa).

RRM domains are found at residues 10 to 89 (NTIY…YSKT) and 208 to 282 (HILF…FAKK).

It belongs to the RRM U1 A/B'' family. U1 snRNP is composed of the 7 core Sm proteins snrpb, snrpd1, snrpd2, snrpd3, snrpe, snrpf and snrpg that assemble in a heptameric protein ring on the Sm site of the small nuclear RNA to form the core snRNP, and at least three U1 snRNP-specific proteins snrnp70/U1-70K, snrpa/U1-A and snrpc/U1-C.

It is found in the nucleus. Component of the spliceosomal U1 snRNP, which is essential for recognition of the pre-mRNA 5' splice-site and the subsequent assembly of the spliceosome. U1 snRNP is the first snRNP to interact with pre-mRNA. This interaction is required for the subsequent binding of U2 snRNP and the U4/U6/U5 tri-snRNP. Snrpa binds stem loop II of U1 snRNA. The chain is U1 small nuclear ribonucleoprotein A (snrpa) from Xenopus laevis (African clawed frog).